Here is a 133-residue protein sequence, read N- to C-terminus: Small ribosomal subunit protein uS12c (133 aa).

It belongs to the universal ribosomal protein uS12 family. As to quaternary structure, part of the 30S ribosomal subunit.

The protein localises to the plastid. It is found in the chloroplast. In terms of biological role, with S4 and S5 plays an important role in translational accuracy. Located at the interface of the 30S and 50S subunits. The sequence is that of Small ribosomal subunit protein uS12c (rps12) from Chlamydomonas reinhardtii (Chlamydomonas smithii).